A 211-amino-acid chain; its full sequence is Small ribosomal subunit protein uS3 (211 aa).

One can recognise a KH type-2 domain in the interval 38–106; that stretch reads LRNFLKKRLY…EIYLNIQEVR (69 aa).

This sequence belongs to the universal ribosomal protein uS3 family. In terms of assembly, part of the 30S ribosomal subunit. Forms a tight complex with proteins S10 and S14.

Functionally, binds the lower part of the 30S subunit head. Binds mRNA in the 70S ribosome, positioning it for translation. The sequence is that of Small ribosomal subunit protein uS3 from Geobacter sulfurreducens (strain ATCC 51573 / DSM 12127 / PCA).